The sequence spans 611 residues: Chaperone protein HscA (611 aa).

The protein belongs to the heat shock protein 70 family.

Functionally, chaperone involved in the maturation of iron-sulfur cluster-containing proteins. Has a low intrinsic ATPase activity which is markedly stimulated by HscB. Involved in the maturation of IscU. This chain is Chaperone protein HscA, found in Buchnera aphidicola subsp. Acyrthosiphon pisum (strain 5A).